The primary structure comprises 261 residues: Flap endonuclease Xni (261 aa).

D105 lines the Mg(2+) pocket. One can recognise a 5'-3' exonuclease domain in the interval 164 to 256 (SQFLDLMALA…DFRVNSPTKA (93 aa)). K(+) is bound by residues L172, A173, P181, I183, and I186. An interaction with DNA region spans residues 185 to 190 (GIGPKS).

The protein belongs to the Xni family. Mg(2+) is required as a cofactor. The cofactor is K(+).

Has flap endonuclease activity. During DNA replication, flap endonucleases cleave the 5'-overhanging flap structure that is generated by displacement synthesis when DNA polymerase encounters the 5'-end of a downstream Okazaki fragment. This Shewanella oneidensis (strain ATCC 700550 / JCM 31522 / CIP 106686 / LMG 19005 / NCIMB 14063 / MR-1) protein is Flap endonuclease Xni.